We begin with the raw amino-acid sequence, 179 residues long: Large ribosomal subunit protein uL5 (179 aa).

This sequence belongs to the universal ribosomal protein uL5 family. As to quaternary structure, part of the 50S ribosomal subunit; contacts the 5S rRNA and probably tRNA. Forms a bridge to the 30S subunit in the 70S ribosome.

Its function is as follows. This is one of the proteins that bind and probably mediate the attachment of the 5S RNA into the large ribosomal subunit, where it forms part of the central protuberance. In the 70S ribosome it contacts protein S13 of the 30S subunit (bridge B1b), connecting the 2 subunits; this bridge is implicated in subunit movement. May contact the P site tRNA; the 5S rRNA and some of its associated proteins might help stabilize positioning of ribosome-bound tRNAs. The sequence is that of Large ribosomal subunit protein uL5 from Pyrobaculum aerophilum (strain ATCC 51768 / DSM 7523 / JCM 9630 / CIP 104966 / NBRC 100827 / IM2).